The sequence spans 413 residues: Arginine biosynthesis bifunctional protein ArgJ (413 aa).

Substrate-binding residues include T160, K186, T197, E284, N408, and S413. The active-site Nucleophile is T197.

Belongs to the ArgJ family. In terms of assembly, heterotetramer of two alpha and two beta chains.

It localises to the cytoplasm. It catalyses the reaction N(2)-acetyl-L-ornithine + L-glutamate = N-acetyl-L-glutamate + L-ornithine. The enzyme catalyses L-glutamate + acetyl-CoA = N-acetyl-L-glutamate + CoA + H(+). It functions in the pathway amino-acid biosynthesis; L-arginine biosynthesis; L-ornithine and N-acetyl-L-glutamate from L-glutamate and N(2)-acetyl-L-ornithine (cyclic): step 1/1. The protein operates within amino-acid biosynthesis; L-arginine biosynthesis; N(2)-acetyl-L-ornithine from L-glutamate: step 1/4. Functionally, catalyzes two activities which are involved in the cyclic version of arginine biosynthesis: the synthesis of N-acetylglutamate from glutamate and acetyl-CoA as the acetyl donor, and of ornithine by transacetylation between N(2)-acetylornithine and glutamate. This is Arginine biosynthesis bifunctional protein ArgJ from Burkholderia mallei (strain ATCC 23344).